The following is a 483-amino-acid chain: tRNA sulfurtransferase (483 aa).

Residues 63-167 enclose the THUMP domain; the sequence is GQLIDMLART…DDQVYLVTKK (105 aa). ATP-binding positions include 185–186, lysine 267, glycine 289, and glutamine 298; that span reads LI. Cysteine 346 and cysteine 457 are oxidised to a cystine. The 79-residue stretch at 405-483 folds into the Rhodanese domain; it reads LPVSAKVIDI…GYTNVGVYRP (79 aa). Cysteine 457 serves as the catalytic Cysteine persulfide intermediate.

It belongs to the ThiI family.

It localises to the cytoplasm. It carries out the reaction [ThiI sulfur-carrier protein]-S-sulfanyl-L-cysteine + a uridine in tRNA + 2 reduced [2Fe-2S]-[ferredoxin] + ATP + H(+) = [ThiI sulfur-carrier protein]-L-cysteine + a 4-thiouridine in tRNA + 2 oxidized [2Fe-2S]-[ferredoxin] + AMP + diphosphate. It catalyses the reaction [ThiS sulfur-carrier protein]-C-terminal Gly-Gly-AMP + S-sulfanyl-L-cysteinyl-[cysteine desulfurase] + AH2 = [ThiS sulfur-carrier protein]-C-terminal-Gly-aminoethanethioate + L-cysteinyl-[cysteine desulfurase] + A + AMP + 2 H(+). It participates in cofactor biosynthesis; thiamine diphosphate biosynthesis. Catalyzes the ATP-dependent transfer of a sulfur to tRNA to produce 4-thiouridine in position 8 of tRNAs, which functions as a near-UV photosensor. Also catalyzes the transfer of sulfur to the sulfur carrier protein ThiS, forming ThiS-thiocarboxylate. This is a step in the synthesis of thiazole, in the thiamine biosynthesis pathway. The sulfur is donated as persulfide by IscS. This is tRNA sulfurtransferase from Saccharophagus degradans (strain 2-40 / ATCC 43961 / DSM 17024).